A 365-amino-acid polypeptide reads, in one-letter code: Growth-regulating factor 7 (365 aa).

The QLQ domain maps to 59–94 (PFTNAQLKELERQAMIYKYMIASIPVPFDLLVSSPS). Residues 107 to 151 (DLEPGRCRRTDGKKWRCAKEVVSNHKYCEKHLHRGRPRSRKHVEP) form the WRC domain. 2 short sequence motifs (bipartite nuclear localization signal) span residues 112–122 (RCRRTDGKKWR) and 140–147 (RGRPRSRK). Positions 137 to 147 (HLHRGRPRSRK) are enriched in basic residues. 2 disordered regions span residues 137 to 187 (HLHR…TLEP) and 332 to 365 (IESY…SSQV). A compositionally biased stretch (polar residues) spans 337 to 365 (LMETPTPSSSPSRVMKKMTSSVSDESSQV).

The protein belongs to the GRF family.

It localises to the nucleus. In terms of biological role, transcription activator that plays a role in the regulation of cell expansion in leaf and cotyledons tissues. Component of a network formed by miR396, the GRFs and their interacting factors (GIFs) acting in the regulation of meristem function, at least partially through the control of cell proliferation. This is Growth-regulating factor 7 (GRF7) from Arabidopsis thaliana (Mouse-ear cress).